The chain runs to 86 residues: Mu-theraphotoxin-Hhn1b 3 (86 aa).

The N-terminal stretch at 1-21 (MKASMFLALTGLALLFVVCYA) is a signal peptide. Residues 22-49 (SESEEKEFSNELLSSVLAVDDNSKGEER) constitute a propeptide that is removed on maturation. Disulfide bonds link Cys-51-Cys-66, Cys-58-Cys-73, and Cys-65-Cys-80. The residue at position 84 (Ile-84) is an Isoleucine amide.

Belongs to the neurotoxin 10 (Hwtx-1) family. 22 (Htx-4) subfamily. In terms of assembly, monomer. In terms of tissue distribution, expressed by the venom gland.

The protein localises to the secreted. Neurotoxin. Selectively blocks neuronal tetrodotoxin-sensitive voltage-gated sodium channels (Nav) with an IC(50) of 44.6 nM. Does not affect tetrodotoxin-resistant voltage-gated sodium channels or calcium channels. The protein is Mu-theraphotoxin-Hhn1b 3 of Cyriopagopus hainanus (Chinese bird spider).